We begin with the raw amino-acid sequence, 412 residues long: Putative competence-damage inducible protein (412 aa).

The protein belongs to the CinA family.

The sequence is that of Putative competence-damage inducible protein from Bacillus cytotoxicus (strain DSM 22905 / CIP 110041 / 391-98 / NVH 391-98).